The primary structure comprises 403 residues: Alkaline protease 1 (403 aa).

The first 21 residues, 1–21 (MQSIKRTLLLLGAVLPAVLAG), serve as a signal peptide directing secretion. The propeptide occupies 22-121 (PIFPHRRAPT…VEEDQVWHLF (100 aa)). Positions 36-120 (KYIVTFKSDV…AVEEDQVWHL (85 aa)) constitute an Inhibitor I9 domain. One can recognise a Peptidase S8 domain in the interval 130 to 403 (PWGLGSISHK…PNLLAYNGNA (274 aa)). Residues Asp162 and His193 each act as charge relay system in the active site. 2 N-linked (GlcNAc...) asparagine glycosylation sites follow: Asn253 and Asn309. Ser349 serves as the catalytic Charge relay system.

It belongs to the peptidase S8 family.

It is found in the secreted. It catalyses the reaction Hydrolysis of proteins with broad specificity, and of Bz-Arg-OEt &gt; Ac-Tyr-OEt. Does not hydrolyze peptide amides.. Secreted alkaline protease that allows assimilation of proteinaceous substrates. The polypeptide is Alkaline protease 1 (alp1) (Aspergillus flavus).